Reading from the N-terminus, the 1246-residue chain is Zinc finger protein 687a (1246 aa).

Positions 24 to 47 (KEAIQSDTHGNHNEHSSVVGKERS) are enriched in basic and acidic residues. Residues 24–387 (KEAIQSDTHG…PTLVESASDA (364 aa)) are disordered. 2 stretches are compositionally biased toward polar residues: residues 88–111 (GEFS…SSVP) and 163–195 (AFTN…FSSK). Low complexity predominate over residues 287–301 (SSTNPTSLTSTNNLP). The segment covering 302–317 (VEEKDLEHIIEERDSP) has biased composition (basic and acidic residues). Over residues 326 to 338 (QSRTSLPSNSQGA) the composition is skewed to polar residues. Composition is skewed to basic and acidic residues over residues 341-350 (SKQRITREEA) and 360-375 (MQEK…EGKS). A C2H2-type 1 zinc finger spans residues 587-619 (YRCLECGDAFALERSLARHYDRRSMRIEVTCNH). The segment at 696 to 719 (HSCPECWSTFKGKQELVAHFQEVE) adopts a C2H2-type 2; degenerate zinc-finger fold. 3 C2H2-type zinc fingers span residues 817–840 (HKCP…ASQH), 854–876 (YKCV…IDTH), and 885–908 (FKCP…KDTH). The tract at residues 907-953 (THRETSNHDGTSTQNSLVKMESSDGEEWGRDEEEDKGKVSDANSAVP) is disordered. Positions 914–923 (HDGTSTQNSL) are enriched in polar residues. Acidic residues predominate over residues 929–940 (SDGEEWGRDEEE). 2 C2H2-type zinc fingers span residues 958–981 (WSCS…TEQH) and 988–1011 (FPCT…RVKH). The C2H2-type 8; degenerate zinc finger occupies 1018 to 1044 (FYCQLCTGEKRSFSSKLILEKHIQAQH). A disordered region spans residues 1045–1093 (AGERGTATQSQAVPQFTDGADSSSEHDAGVLGGSSVEPESRLAESTLTR). 2 C2H2-type zinc fingers span residues 1137-1160 (AQCQ…FISH) and 1210-1232 (HICK…FRTH).

Belongs to the krueppel C2H2-type zinc-finger protein family. In terms of tissue distribution, widely expressed with highest levels in kidney, spleen and ovary.

It localises to the nucleus. In terms of biological role, may be involved in transcriptional regulation. The protein is Zinc finger protein 687a (znf687a) of Danio rerio (Zebrafish).